Reading from the N-terminus, the 96-residue chain is Small ribosomal subunit protein bS6 (96 aa).

The protein belongs to the bacterial ribosomal protein bS6 family.

In terms of biological role, binds together with bS18 to 16S ribosomal RNA. The polypeptide is Small ribosomal subunit protein bS6 (Carboxydothermus hydrogenoformans (strain ATCC BAA-161 / DSM 6008 / Z-2901)).